The following is a 144-amino-acid chain: Large ribosomal subunit protein uL15 (144 aa).

The interval 1–59 (MHLNTLAPAPGAKKSSKRVGRGMGSGLGKTGGRGHKGQKSRSGGSVKPGFEGGQMPIQR) is disordered. Residues 21–31 (RGMGSGLGKTG) are compositionally biased toward gly residues.

Belongs to the universal ribosomal protein uL15 family. As to quaternary structure, part of the 50S ribosomal subunit.

Functionally, binds to the 23S rRNA. This is Large ribosomal subunit protein uL15 from Pseudoalteromonas atlantica (strain T6c / ATCC BAA-1087).